The following is a 508-amino-acid chain: Light-independent protochlorophyllide reductase subunit B (508 aa).

Residue aspartate 36 participates in [4Fe-4S] cluster binding. Aspartate 294 serves as the catalytic Proton donor. Glycine 429–methionine 430 serves as a coordination point for substrate.

The protein belongs to the ChlB/BchB/BchZ family. Protochlorophyllide reductase is composed of three subunits; ChlL, ChlN and ChlB. Forms a heterotetramer of two ChlB and two ChlN subunits. It depends on [4Fe-4S] cluster as a cofactor.

The catalysed reaction is chlorophyllide a + oxidized 2[4Fe-4S]-[ferredoxin] + 2 ADP + 2 phosphate = protochlorophyllide a + reduced 2[4Fe-4S]-[ferredoxin] + 2 ATP + 2 H2O. It functions in the pathway porphyrin-containing compound metabolism; chlorophyll biosynthesis (light-independent). Component of the dark-operative protochlorophyllide reductase (DPOR) that uses Mg-ATP and reduced ferredoxin to reduce ring D of protochlorophyllide (Pchlide) to form chlorophyllide a (Chlide). This reaction is light-independent. The NB-protein (ChlN-ChlB) is the catalytic component of the complex. In Acaryochloris marina (strain MBIC 11017), this protein is Light-independent protochlorophyllide reductase subunit B.